Reading from the N-terminus, the 162-residue chain is ATP synthase subunit b (162 aa).

A helical transmembrane segment spans residues 2–22 (LEFNATLLAQIVDFIILLIFL).

Belongs to the ATPase B chain family. F-type ATPases have 2 components, F(1) - the catalytic core - and F(0) - the membrane proton channel. F(1) has five subunits: alpha(3), beta(3), gamma(1), delta(1), epsilon(1). F(0) has three main subunits: a(1), b(2) and c(10-14). The alpha and beta chains form an alternating ring which encloses part of the gamma chain. F(1) is attached to F(0) by a central stalk formed by the gamma and epsilon chains, while a peripheral stalk is formed by the delta and b chains.

It is found in the cell membrane. Functionally, f(1)F(0) ATP synthase produces ATP from ADP in the presence of a proton or sodium gradient. F-type ATPases consist of two structural domains, F(1) containing the extramembraneous catalytic core and F(0) containing the membrane proton channel, linked together by a central stalk and a peripheral stalk. During catalysis, ATP synthesis in the catalytic domain of F(1) is coupled via a rotary mechanism of the central stalk subunits to proton translocation. Component of the F(0) channel, it forms part of the peripheral stalk, linking F(1) to F(0). The protein is ATP synthase subunit b of Pelotomaculum thermopropionicum (strain DSM 13744 / JCM 10971 / SI).